Reading from the N-terminus, the 95-residue chain is Aspartyl/glutamyl-tRNA(Asn/Gln) amidotransferase subunit C (95 aa).

This sequence belongs to the GatC family. As to quaternary structure, heterotrimer of A, B and C subunits.

It carries out the reaction L-glutamyl-tRNA(Gln) + L-glutamine + ATP + H2O = L-glutaminyl-tRNA(Gln) + L-glutamate + ADP + phosphate + H(+). The enzyme catalyses L-aspartyl-tRNA(Asn) + L-glutamine + ATP + H2O = L-asparaginyl-tRNA(Asn) + L-glutamate + ADP + phosphate + 2 H(+). Allows the formation of correctly charged Asn-tRNA(Asn) or Gln-tRNA(Gln) through the transamidation of misacylated Asp-tRNA(Asn) or Glu-tRNA(Gln) in organisms which lack either or both of asparaginyl-tRNA or glutaminyl-tRNA synthetases. The reaction takes place in the presence of glutamine and ATP through an activated phospho-Asp-tRNA(Asn) or phospho-Glu-tRNA(Gln). This Sinorhizobium fredii (strain NBRC 101917 / NGR234) protein is Aspartyl/glutamyl-tRNA(Asn/Gln) amidotransferase subunit C.